Consider the following 117-residue polypeptide: Minor capsid protein VP2 (117 aa).

Belongs to the lagovirus VP2 protein family. Homooligomer. The portal-like structure consists in 12 copies of VP2. Interacts with capsid protein VP1.

The protein resides in the virion. It localises to the host cytoplasm. In terms of biological role, minor structural protein that forms a portal-like structure at a unique three-fold axis of symmetry, following binding to the host receptor. The channel formed by VP2 may allow the delivery of the viral genome through the host endosomal membrane. This chain is Minor capsid protein VP2, found in Oryctolagus cuniculus (Rabbit).